The sequence spans 127 residues: Small ribosomal subunit protein uS12 (127 aa).

Asp89 is modified (3-methylthioaspartic acid).

This sequence belongs to the universal ribosomal protein uS12 family. As to quaternary structure, part of the 30S ribosomal subunit. Contacts proteins S8 and S17. May interact with IF1 in the 30S initiation complex.

Functionally, with S4 and S5 plays an important role in translational accuracy. In terms of biological role, interacts with and stabilizes bases of the 16S rRNA that are involved in tRNA selection in the A site and with the mRNA backbone. Located at the interface of the 30S and 50S subunits, it traverses the body of the 30S subunit contacting proteins on the other side and probably holding the rRNA structure together. The combined cluster of proteins S8, S12 and S17 appears to hold together the shoulder and platform of the 30S subunit. This is Small ribosomal subunit protein uS12 from Nautilia profundicola (strain ATCC BAA-1463 / DSM 18972 / AmH).